We begin with the raw amino-acid sequence, 335 residues long: NADH-quinone oxidoreductase subunit H (335 aa).

8 helical membrane-spanning segments follow: residues Val11–Leu31, Val81–Ile101, Ile114–Gly134, Val154–Phe174, Leu187–Val207, Phe238–Phe258, Gln270–Leu290, and Trp307–Trp327.

Belongs to the complex I subunit 1 family. NDH-1 is composed of 13 different subunits. Subunits NuoA, H, J, K, L, M, N constitute the membrane sector of the complex.

The protein localises to the cell inner membrane. The catalysed reaction is a quinone + NADH + 5 H(+)(in) = a quinol + NAD(+) + 4 H(+)(out). Functionally, NDH-1 shuttles electrons from NADH, via FMN and iron-sulfur (Fe-S) centers, to quinones in the respiratory chain. The immediate electron acceptor for the enzyme in this species is believed to be ubiquinone. Couples the redox reaction to proton translocation (for every two electrons transferred, four hydrogen ions are translocated across the cytoplasmic membrane), and thus conserves the redox energy in a proton gradient. This subunit may bind ubiquinone. This Pseudomonas fluorescens (strain Pf0-1) protein is NADH-quinone oxidoreductase subunit H.